A 510-amino-acid polypeptide reads, in one-letter code: 11S globulin (510 aa).

Residues 1–23 (MAKPILLSISLCLVALVNGCLAQ) form the signal peptide. Disulfide bonds link cysteine 35–cysteine 68 and cysteine 111–cysteine 325. A Cupin type-1 1 domain is found at 38 to 257 (KRLVALEPSN…AFNVDTETAR (220 aa)). Disordered stretches follow at residues 194-239 (AGNP…VFSG) and 284-319 (WSRE…DDNG). The segment covering 284-318 (WSREEQEREERKERERERESESERRQSRRGGRDDN) has biased composition (basic and acidic residues). Residues 318 to 323 (NGLEET) carry the NGXEET; peptidase recognition motif motif. The region spanning 331–480 (ENIGDPSRAD…ALQIPREDAR (150 aa)) is the Cupin type-1 2 domain. The interval 487–510 (QESTLVRSRPSSSRSSRSERRAEV) is disordered.

Belongs to the 11S seed storage protein (globulins) family. In terms of assembly, homohexamer. Can assemble in other multimeric configurations. Post-translationally, proteolytically processed from a single precursor to produce an acidic and a basic chain that are linked by a disulfide bond. Expressed in endosperm of the seed.

Functionally, seed storage protein. In Juglans nigra (Black walnut), this protein is 11S globulin.